Consider the following 88-residue polypeptide: Monensin polyketide synthase acyl carrier protein (88 aa).

Residues 5 to 82 (PFTLADLQRI…ELIDHVNERL (78 aa)) enclose the Carrier domain. The residue at position 42 (S42) is an O-(pantetheine 4'-phosphoryl)serine.

Post-translationally, 4'-phosphopantetheine is transferred from CoA to a specific serine of the apo-ACP-like protein.

It functions in the pathway antifungal biosynthesis; monensin biosynthesis. In terms of biological role, acyl carrier protein. The protein is Monensin polyketide synthase acyl carrier protein of Streptomyces virginiae (Streptomyces cinnamonensis).